Consider the following 134-residue polypeptide: Psoriasis susceptibility 1 candidate gene 2 protein homolog (134 aa).

The signal sequence occupies residues 1-21; the sequence is MLTWKLLGLLVLCLCAGGISG. The tract at residues 18–134 is disordered; the sequence is GISGNGDPSP…DLDPPQEEYR (117 aa). 2 stretches are compositionally biased toward pro residues: residues 39–67 and 81–98; these read PPLPLGPPIPGDPWPGAPPLFDEPPPPGS and PPKPPSTDPPKPPLPDDP. Residues 122-134 show a composition bias toward acidic residues; that stretch reads EEPDLDPPQEEYR.

The protein resides in the secreted. The polypeptide is Psoriasis susceptibility 1 candidate gene 2 protein homolog (Psors1c2) (Mus musculus (Mouse)).